Here is a 275-residue protein sequence, read N- to C-terminus: Adaptin ear-binding coat-associated protein 1 (275 aa).

A disordered region spans residues 168-275 (AKKGGASKPR…APQPSNWVQF (108 aa)). A compositionally biased stretch (pro residues) spans 187-201 (LPPPPGGKVTIPPPS). The residue at position 211 (Thr211) is a Phosphothreonine. A compositionally biased stretch (low complexity) spans 233–248 (SPAPVSTSAPAPVSTS). Short sequence motifs (WXXF motif) lie at residues 252–255 (WGDF) and 272–275 (WVQF). A compositionally biased stretch (polar residues) spans 256-275 (STASSSVPNQAPQPSNWVQF).

The protein belongs to the NECAP family. In terms of assembly, interacts with AP1G1 and AP2A1 components of the adapter protein complexes AP-1 and AP-2. Interacts with the GAE domain proteins GGA1, GGA2 and GGA3. As to expression, expressed primarily in brain (at protein level).

It is found in the cytoplasmic vesicle. It localises to the clathrin-coated vesicle membrane. The protein localises to the cell membrane. Its function is as follows. Involved in endocytosis. The polypeptide is Adaptin ear-binding coat-associated protein 1 (Necap1) (Mus musculus (Mouse)).